The chain runs to 305 residues: Glutaminase 2 (305 aa).

Positions 61, 113, 158, 165, 189, 241, and 259 each coordinate substrate.

The protein belongs to the glutaminase family. Homotetramer.

It catalyses the reaction L-glutamine + H2O = L-glutamate + NH4(+). This chain is Glutaminase 2, found in Clostridium perfringens (strain 13 / Type A).